An 87-amino-acid chain; its full sequence is Small ribosomal subunit protein uS15c (87 aa).

It belongs to the universal ribosomal protein uS15 family. In terms of assembly, part of the 30S ribosomal subunit.

Its subcellular location is the plastid. It localises to the chloroplast. The sequence is that of Small ribosomal subunit protein uS15c (rps15) from Solanum tuberosum (Potato).